A 385-amino-acid polypeptide reads, in one-letter code: Zinc finger protein B385R (385 aa).

2 consecutive C2H2-type zinc fingers follow at residues 166–190 and 168–190; these read LQCPNCGCIQELMGTIFDETHFYNH and CPNCGCIQELMGTIFDETHFYNH.

The protein belongs to the asfivirus B385R family.

The chain is Zinc finger protein B385R from African swine fever virus (isolate Tick/South Africa/Pretoriuskop Pr4/1996) (ASFV).